Consider the following 467-residue polypeptide: Uronate isomerase (467 aa).

The protein belongs to the metallo-dependent hydrolases superfamily. Uronate isomerase family.

The enzyme catalyses D-glucuronate = D-fructuronate. It carries out the reaction aldehydo-D-galacturonate = keto-D-tagaturonate. It participates in carbohydrate metabolism; pentose and glucuronate interconversion. This is Uronate isomerase from Histophilus somni (strain 2336) (Haemophilus somnus).